Reading from the N-terminus, the 307-residue chain is Sporulation sigma-E factor-processing peptidase (307 aa).

5 helical membrane passes run 7–27, 36–56, 57–77, 89–109, and 127–147; these read LIWM…AVVL, LLLG…PFSH, LMVH…MTFG, LTFY…HFLF, and FGDP…SYFS. Residue aspartate 183 is part of the active site.

It belongs to the peptidase U4 family. As to quaternary structure, self-associates. Interacts with SigE. Interacts with SpoIIR.

Its subcellular location is the cell membrane. Its function is as follows. Probable aspartic protease that is responsible for the proteolytic cleavage of the RNA polymerase sigma E factor (SigE/spoIIGB) to yield the active peptide in the mother cell during sporulation. Responds to a signal from the forespore that is triggered by the extracellular signal protein SpoIIR. This Priestia megaterium (strain ATCC 12872 / QMB1551) (Bacillus megaterium) protein is Sporulation sigma-E factor-processing peptidase.